A 222-amino-acid chain; its full sequence is Protein-L-isoaspartate O-methyltransferase (222 aa).

The active site involves Ser72.

It belongs to the methyltransferase superfamily. L-isoaspartyl/D-aspartyl protein methyltransferase family.

The protein localises to the cytoplasm. It catalyses the reaction [protein]-L-isoaspartate + S-adenosyl-L-methionine = [protein]-L-isoaspartate alpha-methyl ester + S-adenosyl-L-homocysteine. Its function is as follows. Catalyzes the methyl esterification of L-isoaspartyl residues in peptides and proteins that result from spontaneous decomposition of normal L-aspartyl and L-asparaginyl residues. It plays a role in the repair and/or degradation of damaged proteins. The sequence is that of Protein-L-isoaspartate O-methyltransferase from Picosynechococcus sp. (strain ATCC 27264 / PCC 7002 / PR-6) (Agmenellum quadruplicatum).